We begin with the raw amino-acid sequence, 358 residues long: G-protein coupled receptor 20 (358 aa).

The Extracellular portion of the chain corresponds to 1–48 (MPSVSPAGPSAGAVPNATAVTTVRTNASGLEVPLFHLFARLDEELHGT). N-linked (GlcNAc...) asparagine glycans are attached at residues N16 and N26. A helical transmembrane segment spans residues 49–69 (FPGLWLALMAVHGAIFLAGLV). Over 70–86 (LNGLALYVFCCRTRAKT) the chain is Cytoplasmic. The helical transmembrane segment at 87–107 (PSVIYTINLVVTDLLVGLSLP) threads the bilayer. The Extracellular segment spans residues 108-125 (TRFAVYYGARGCLRCAFP). Residues 126 to 146 (HVLGYFLNMHCSILFLTCICV) form a helical membrane-spanning segment. The Cytoplasmic portion of the chain corresponds to 147 to 168 (DRYLAIVRPEGSRRCRQPACAR). A helical membrane pass occupies residues 169 to 189 (AVCAFVWLAAGAVTLSVLGVT). At 190-196 (GSRPCCR) the chain is on the extracellular side. The helical transmembrane segment at 197-217 (VFALTVLEFLLPLLVISVFTG) threads the bilayer. Residues 218 to 238 (RIMCALSRPGLLHQGRQRRVR) are Cytoplasmic-facing. The chain crosses the membrane as a helical span at residues 239–259 (AMQLLLTVLIIFLVCFTPFHA). Residues 260–275 (RQVAVALWPDMPHHTS) are Extracellular-facing. The helical transmembrane segment at 276 to 296 (LVVYHVAVTLSSLNSCMDPIV) threads the bilayer. The Cytoplasmic segment spans residues 297–358 (YCFVTSGFQA…TQALANGPEA (62 aa)). Positions 315–339 (HGEREPSSGDVVSMHRSSKGSGRHH) are disordered. A compositionally biased stretch (basic residues) spans 330–339 (RSSKGSGRHH).

The protein belongs to the G-protein coupled receptor 1 family. Ubiquitous with highest levels in intestinal tissues. In the brain detected in thalamus, putamen, and caudate, but not in frontal cortex, pons and hypothalamus.

It localises to the cell membrane. Orphan receptor with constitutive G(i) signaling activity that activate cyclic AMP. The sequence is that of G-protein coupled receptor 20 (GPR20) from Homo sapiens (Human).